We begin with the raw amino-acid sequence, 61 residues long: Small ribosomal subunit protein uS14 (61 aa).

Positions 24, 27, 40, and 43 each coordinate Zn(2+).

The protein belongs to the universal ribosomal protein uS14 family. Zinc-binding uS14 subfamily. Part of the 30S ribosomal subunit. Contacts proteins S3 and S10. Zn(2+) serves as cofactor.

Functionally, binds 16S rRNA, required for the assembly of 30S particles and may also be responsible for determining the conformation of the 16S rRNA at the A site. The protein is Small ribosomal subunit protein uS14 of Campylobacter concisus (strain 13826).